The sequence spans 109 residues: Small ribosomal subunit protein uS17 (109 aa).

The protein belongs to the universal ribosomal protein uS17 family. In terms of assembly, part of the 30S ribosomal subunit.

Functionally, one of the primary rRNA binding proteins, it binds specifically to the 5'-end of 16S ribosomal RNA. This Halobacterium salinarum (strain ATCC 29341 / DSM 671 / R1) protein is Small ribosomal subunit protein uS17.